We begin with the raw amino-acid sequence, 242 residues long: Glucosamine-6-phosphate deaminase (242 aa).

Aspartate 67 (proton acceptor; for enolization step) is an active-site residue. The active-site For ring-opening step is the asparagine 136. Histidine 138 serves as the catalytic Proton acceptor; for ring-opening step. Glutamate 143 (for ring-opening step) is an active-site residue.

It belongs to the glucosamine/galactosamine-6-phosphate isomerase family. NagB subfamily.

The catalysed reaction is alpha-D-glucosamine 6-phosphate + H2O = beta-D-fructose 6-phosphate + NH4(+). Its pathway is amino-sugar metabolism; N-acetylneuraminate degradation; D-fructose 6-phosphate from N-acetylneuraminate: step 5/5. In terms of biological role, catalyzes the reversible isomerization-deamination of glucosamine 6-phosphate (GlcN6P) to form fructose 6-phosphate (Fru6P) and ammonium ion. The protein is Glucosamine-6-phosphate deaminase of Clostridium perfringens (strain SM101 / Type A).